The chain runs to 248 residues: Triosephosphate isomerase (248 aa).

Residues N10 and K12 each coordinate substrate. H95 (electrophile) is an active-site residue. E165 functions as the Proton acceptor in the catalytic mechanism.

It belongs to the triosephosphate isomerase family. As to quaternary structure, homodimer.

The enzyme catalyses D-glyceraldehyde 3-phosphate = dihydroxyacetone phosphate. Its pathway is carbohydrate biosynthesis; gluconeogenesis. It participates in carbohydrate degradation; glycolysis; D-glyceraldehyde 3-phosphate from glycerone phosphate: step 1/1. The protein is Triosephosphate isomerase (tpi-1) of Neurospora crassa (strain ATCC 24698 / 74-OR23-1A / CBS 708.71 / DSM 1257 / FGSC 987).